The chain runs to 691 residues: ATP-dependent zinc metalloprotease FtsH 2 (691 aa).

Residues 1 to 48 (MTDEPQSDEQQTTEQERPLGTKRATRADGLRRPGVRSGLAERRSPAAD) form a disordered region. The Cytoplasmic segment spans residues 1–64 (MTDEPQSDEQ…AAVRRFLLRD (64 aa)). Positions 14–31 (EQERPLGTKRATRADGLR) are enriched in basic and acidic residues. A helical transmembrane segment spans residues 65–85 (VFALGLMIAALVIVILFFTLL). The Extracellular portion of the chain corresponds to 86–168 (GATKPTSSGT…AVKQQPGKAQ (83 aa)). Residues 169 to 189 (VTIVVQFLLPILLLVCLFALF) traverse the membrane as a helical segment. Topologically, residues 190–691 (MRIGQDGGAG…ERGSARDRDA (502 aa)) are cytoplasmic. An ATP-binding site is contributed by 265–272 (GPPGTGKT). Residue H486 participates in Zn(2+) binding. The active site involves E487. Positions 490 and 563 each coordinate Zn(2+).

It in the central section; belongs to the AAA ATPase family. In the C-terminal section; belongs to the peptidase M41 family. Homohexamer. The cofactor is Zn(2+).

It localises to the cell membrane. Acts as a processive, ATP-dependent zinc metallopeptidase for both cytoplasmic and membrane proteins. Plays a role in the quality control of integral membrane proteins. This Conexibacter woesei (strain DSM 14684 / CCUG 47730 / CIP 108061 / JCM 11494 / NBRC 100937 / ID131577) protein is ATP-dependent zinc metalloprotease FtsH 2.